The following is a 120-amino-acid chain: Large ribosomal subunit protein bL19 (120 aa).

The protein belongs to the bacterial ribosomal protein bL19 family.

This protein is located at the 30S-50S ribosomal subunit interface and may play a role in the structure and function of the aminoacyl-tRNA binding site. The polypeptide is Large ribosomal subunit protein bL19 (Thermodesulfovibrio yellowstonii (strain ATCC 51303 / DSM 11347 / YP87)).